The following is a 153-amino-acid chain: Mitotic-spindle organizing protein 2 (153 aa).

A disordered region spans residues 80-153 (KVSETSTGDA…SSSSSQLTSN (74 aa)). Composition is skewed to polar residues over residues 81–99 (VSETSTGDASSTSHTTAVP) and 107–133 (KMSSGQGEKSARESSSQRVPRQVSATR). A compositionally biased stretch (low complexity) spans 134-153 (GQKSTKSSGSSSSSSQLTSN).

This sequence belongs to the MOZART2 family. As to quaternary structure, part of the gamma-tubulin complex. Interacts with TUBG1.

It localises to the cytoplasm. The protein localises to the cytoskeleton. Its subcellular location is the microtubule organizing center. It is found in the centrosome. The protein resides in the spindle. The protein is Mitotic-spindle organizing protein 2 (mzt2) of Danio rerio (Zebrafish).